The sequence spans 110 residues: Hydrogenase maturation factor HypA (110 aa).

H2 is a binding site for Ni(2+). C70, C73, C86, and C89 together coordinate Zn(2+).

It belongs to the HypA/HybF family.

Functionally, involved in the maturation of [NiFe] hydrogenases. Required for nickel insertion into the metal center of the hydrogenase. The protein is Hydrogenase maturation factor HypA of Geobacter metallireducens (strain ATCC 53774 / DSM 7210 / GS-15).